A 182-amino-acid polypeptide reads, in one-letter code: UPF0301 protein NMC1274 (182 aa).

This sequence belongs to the UPF0301 (AlgH) family.

This Neisseria meningitidis serogroup C / serotype 2a (strain ATCC 700532 / DSM 15464 / FAM18) protein is UPF0301 protein NMC1274.